The chain runs to 425 residues: Glutamate-1-semialdehyde 2,1-aminomutase (425 aa).

K265 carries the post-translational modification N6-(pyridoxal phosphate)lysine.

It belongs to the class-III pyridoxal-phosphate-dependent aminotransferase family. HemL subfamily. Homodimer. It depends on pyridoxal 5'-phosphate as a cofactor.

It is found in the cytoplasm. It carries out the reaction (S)-4-amino-5-oxopentanoate = 5-aminolevulinate. It participates in porphyrin-containing compound metabolism; protoporphyrin-IX biosynthesis; 5-aminolevulinate from L-glutamyl-tRNA(Glu): step 2/2. This is Glutamate-1-semialdehyde 2,1-aminomutase from Laribacter hongkongensis (strain HLHK9).